Reading from the N-terminus, the 344-residue chain is D-amino-acid oxidase (344 aa).

Residues Ala11, Ser14, Ser49, Gly53, Asn55, and Ile167 each contribute to the FAD site. (R)-lactate-binding residues include Tyr229 and Arg290. Residues Tyr229 and Arg290 each contribute to the anthranilate site. FAD is bound by residues Arg290, Ser321, Gly324, Tyr325, and Gln326.

Belongs to the DAMOX/DASOX family. The cofactor is FAD.

The protein resides in the peroxisome. The catalysed reaction is a D-alpha-amino acid + O2 + H2O = a 2-oxocarboxylate + H2O2 + NH4(+). It catalyses the reaction D-alanine + O2 + H2O = pyruvate + H2O2 + NH4(+). In terms of biological role, catalyzes the oxidative deamination of D-amino acids with broad substrate specificity. Enables the organism to utilize D-amino acids as a source of nutrients. Enables the organism to utilize D-alanine as a source of nitrogen. The chain is D-amino-acid oxidase from Komagataella phaffii (strain GS115 / ATCC 20864) (Yeast).